The chain runs to 444 residues: MRNIIYFILSLLFSFKGYALETINIEHGRADPTPIAVNKFNADSSADDVVGHDVVKVISNDLKLSGLFRPISSASFIEEKTGIEYKPLFAAWRQINASLLVNGEVKKLESGKLKISFILWDTLLEKQLAGEILEAPENLWRRAAHKIADKIYEKITGDAGYFDTKIVYVSESTSLPKIKRIALMDYDGANNKYLTNGKSLVLTPRFARSADKIFYVSYATKRRALVYEKDLKTGKESVVGDFSGISFAPRFSPDGRKAVMSIAKNGSTHIYEIDLATKRLHKLTDGFGINTSPSYSPDGKKIVYNSDRNGVPQLYIMNSDGSDVQRISFGGGSYTAPSWSPRGDYIAFTKITRGAEGKTFNIGIMKACPQDDENSERIITSGYLVESPCWSPNGRVIMFAKGWPSRAKAPGKNKIFAIDLTGHNEREIITPADASDPEWSGVLN.

Positions Met-1–Ala-19 are cleaved as a signal peptide.

It belongs to the TolB family. In terms of assembly, the Tol-Pal system is composed of five core proteins: the inner membrane proteins TolA, TolQ and TolR, the periplasmic protein TolB and the outer membrane protein Pal. They form a network linking the inner and outer membranes and the peptidoglycan layer.

It localises to the periplasm. Its function is as follows. Part of the Tol-Pal system, which plays a role in outer membrane invagination during cell division and is important for maintaining outer membrane integrity. The chain is Tol-Pal system protein TolB from Rickettsia felis (strain ATCC VR-1525 / URRWXCal2) (Rickettsia azadi).